A 323-amino-acid polypeptide reads, in one-letter code: Transcriptional regulator protein Pur-beta-A (323 aa).

Disordered regions lie at residues 1-34 (MADG…QELA), 100-122 (SPEQ…PRRA), and 286-323 (QERQ…VDDD). Position 2 is an N-acetylalanine (Ala-2). Residues 9-19 (ERGGSSGGPGG) are compositionally biased toward gly residues. Residues 24–34 (MSREQETQELA) show a composition bias toward basic and acidic residues. Residues 27–257 (EQETQELATK…LRVSEVKPSY (231 aa)) form a DNA-binding region. The span at 286 to 305 (QERQRDKMYERRGPGDRERS) shows a compositional bias: basic and acidic residues. Over residues 313 to 323 (DDSETEDVDDD) the composition is skewed to acidic residues.

This sequence belongs to the PUR DNA-binding protein family.

It localises to the nucleus. Transcriptional regulator which can act as an activator or a repressor. The chain is Transcriptional regulator protein Pur-beta-A (purb-a) from Xenopus laevis (African clawed frog).